A 267-amino-acid polypeptide reads, in one-letter code: Putative carbamate hydrolase RutD (267 aa).

The region spanning valine 23–histidine 139 is the AB hydrolase-1 domain.

This sequence belongs to the AB hydrolase superfamily. Hydrolase RutD family.

The enzyme catalyses carbamate + 2 H(+) = NH4(+) + CO2. In terms of biological role, involved in pyrimidine catabolism. May facilitate the hydrolysis of carbamate, a reaction that can also occur spontaneously. This Caulobacter segnis (strain ATCC 21756 / DSM 7131 / JCM 7823 / NBRC 15250 / LMG 17158 / TK0059) (Mycoplana segnis) protein is Putative carbamate hydrolase RutD.